We begin with the raw amino-acid sequence, 71 residues long: SPI-2 type 3 secretion system needle filament protein (71 aa).

Belongs to the SctF family. In terms of assembly, the core secretion machinery of the T3SS is composed of approximately 20 different proteins, including cytoplasmic components, a base, an export apparatus and a needle. This subunit polymerizes and forms the helical needle filament.

The protein localises to the secreted. It is found in the cell surface. Functionally, component of the type III secretion system (T3SS), also called injectisome, which is used to inject bacterial effector proteins into eukaryotic host cells. SsaG/SctF2 forms the external needle filament that protrudes from the bacterial surface. In terms of biological role, during infection, can induce innate immune responses. The needle proteins interact with host TLR2 or TLR4, and induce signaling by NF-kappa-B and/or AP-1. This activation is MyD88 dependent and results in increased expression of cytokines, including TNF-alpha, IL-6 and IL-8. In Salmonella typhimurium (strain LT2 / SGSC1412 / ATCC 700720), this protein is SPI-2 type 3 secretion system needle filament protein.